We begin with the raw amino-acid sequence, 87 residues long: Probable acyl carrier protein PigG (87 aa).

The 78-residue stretch at 1–78 (MLESKLINHI…SMVALVQRLK (78 aa)) folds into the Carrier domain. Position 36 is an O-(pantetheine 4'-phosphoryl)serine (Ser36).

It participates in antibiotic biosynthesis; prodigiosin biosynthesis. Its function is as follows. Involved in the biosynthesis of 4-methoxy-2,2'-bipyrrole-5-carbaldehyde (MBC), one of the terminal products involved in the biosynthesis of the red antibiotic prodigiosin (Pig). Carrier of the L-prolyl group transferred from L-prolyl-AMP by PigI. This is Probable acyl carrier protein PigG from Serratia sp. (strain ATCC 39006) (Prodigiosinella confusarubida).